A 556-amino-acid chain; its full sequence is Chaperone protein HscC (556 aa).

It belongs to the heat shock protein 70 family.

In terms of biological role, probable chaperone. Has ATPase activity. Not stimulated by DnaJ. This Escherichia coli (strain K12) protein is Chaperone protein HscC (hscC).